We begin with the raw amino-acid sequence, 502 residues long: Glutamate decarboxylase (502 aa).

N6-(pyridoxal phosphate)lysine is present on lysine 278. Positions 471–502 (GLHHFHMDTVETQKDIIKHWRKIAGKKTSGVC) are calmodulin-binding.

It belongs to the group II decarboxylase family. The cofactor is pyridoxal 5'-phosphate.

The enzyme catalyses L-glutamate + H(+) = 4-aminobutanoate + CO2. Functionally, catalyzes the production of GABA. The calmodulin-binding is calcium-dependent and it is proposed that this may, directly or indirectly, form a calcium regulated control of GABA biosynthesis. This Solanum lycopersicum (Tomato) protein is Glutamate decarboxylase.